The sequence spans 162 residues: Probable chemoreceptor glutamine deamidase CheD (162 aa).

The protein belongs to the CheD family.

The enzyme catalyses L-glutaminyl-[protein] + H2O = L-glutamyl-[protein] + NH4(+). Its function is as follows. Probably deamidates glutamine residues to glutamate on methyl-accepting chemotaxis receptors (MCPs), playing an important role in chemotaxis. This is Probable chemoreceptor glutamine deamidase CheD from Pyrococcus horikoshii (strain ATCC 700860 / DSM 12428 / JCM 9974 / NBRC 100139 / OT-3).